The sequence spans 462 residues: Arginine-specific demethylase JMJ20 (462 aa).

The JmjC domain occupies 115–287; that stretch reads VKEYPDYTAY…WVWDLLWKDY (173 aa). Fe cation contacts are provided by His177, Asp179, and His255.

The protein belongs to the JARID1 histone demethylase family. It depends on Fe(2+) as a cofactor. As to expression, mostly expressed in leaves, and, to a lower extent, in inflorescences, roots, siliques and stems.

It localises to the nucleus. It carries out the reaction N(omega),N(omega)-dimethyl-L-arginyl-[protein] + 2-oxoglutarate + O2 = N(omega)-methyl-L-arginyl-[protein] + formaldehyde + succinate + CO2. Histone demethylase that demethylates 'Arg-3' (H4R3me) of histone H4 with a specific activity for H4R3me2. Involved in the positive regulation of gene expression. Together with JMJ22, positively regulates seed germination by promoting the removal of repressive histone arginine methylations (e.g. H4R3me2) at GA3ox1 and GA3ox2 to trigger gibberellic acid (GA) biosynthesis. The sequence is that of Arginine-specific demethylase JMJ20 from Arabidopsis thaliana (Mouse-ear cress).